Reading from the N-terminus, the 228-residue chain is 7-cyano-7-deazaguanine synthase (228 aa).

8–18 (LSGGMDSATTL) is a binding site for ATP. Zn(2+) contacts are provided by Cys188, Cys198, Cys201, and Cys204.

Belongs to the QueC family. Zn(2+) serves as cofactor.

The enzyme catalyses 7-carboxy-7-deazaguanine + NH4(+) + ATP = 7-cyano-7-deazaguanine + ADP + phosphate + H2O + H(+). It participates in purine metabolism; 7-cyano-7-deazaguanine biosynthesis. Its function is as follows. Catalyzes the ATP-dependent conversion of 7-carboxy-7-deazaguanine (CDG) to 7-cyano-7-deazaguanine (preQ(0)). This Nitrosomonas europaea (strain ATCC 19718 / CIP 103999 / KCTC 2705 / NBRC 14298) protein is 7-cyano-7-deazaguanine synthase.